The sequence spans 445 residues: MKKYFLKCGYFLVCFCLPLIVFANPKTDNERFFIRLSQAPLAQTLEQLAFQQDVNLVIGDILENKISLKLNNIDMPRLLQIIAKSKHLTLNKDDGIYYLNGSQSGKGQVAGNLTTNEPHLVSHTVKLHFAKASELMKSLTTGSGSLLSPAGSITFDDRSNLLVIQDEPRSVQNIKKLIAEMDKPIEQIAIEARIVTITDESLKELGVRWGIFNPTENARRVAGSLTGNSFENIADNLNVNFATTTTPAGSIALQVAKINGRLLDLELSALERENNVEIIASPRLLTTNKKSASIKQGTEIPYIVSNTRNDTQSVEFREAVLGLEVTPHISKDNNILLDLLVSQNSPGSRVAYGQNEVVSIDKQEINTQVFAKDGETIVLGGVFHDTITKSEDKVPLLGDIPVIKRLFSKESERHQKRELVIFVTPHILKAGETLEALKQKSEGKK.

A signal peptide spans 1 to 23 (MKKYFLKCGYFLVCFCLPLIVFA).

It belongs to the bacterial secretin family. PilQ subfamily.

The protein localises to the cell outer membrane. Involved in transformation (genetic competence for DNA uptake). The polypeptide is Competence protein E (comE) (Haemophilus influenzae (strain ATCC 51907 / DSM 11121 / KW20 / Rd)).